The chain runs to 593 residues: Arginine--tRNA ligase (593 aa).

Positions 138 to 148 (ANPTGPLHVGH) match the 'HIGH' region motif.

The protein belongs to the class-I aminoacyl-tRNA synthetase family. In terms of assembly, monomer.

The protein localises to the cytoplasm. The catalysed reaction is tRNA(Arg) + L-arginine + ATP = L-arginyl-tRNA(Arg) + AMP + diphosphate. The chain is Arginine--tRNA ligase from Burkholderia cenocepacia (strain ATCC BAA-245 / DSM 16553 / LMG 16656 / NCTC 13227 / J2315 / CF5610) (Burkholderia cepacia (strain J2315)).